We begin with the raw amino-acid sequence, 103 residues long: Large ribosomal subunit protein bL21 (103 aa).

Belongs to the bacterial ribosomal protein bL21 family. In terms of assembly, part of the 50S ribosomal subunit. Contacts protein L20.

Its function is as follows. This protein binds to 23S rRNA in the presence of protein L20. The sequence is that of Large ribosomal subunit protein bL21 from Paraburkholderia phytofirmans (strain DSM 17436 / LMG 22146 / PsJN) (Burkholderia phytofirmans).